A 567-amino-acid chain; its full sequence is Urease subunit alpha 1 (567 aa).

In terms of domain architecture, Urease spans 128–567 (GAVDTHVHYI…LPLAQLYHLF (440 aa)). 3 residues coordinate Ni(2+): H133, H135, and K216. Position 216 is an N6-carboxylysine (K216). H218 serves as a coordination point for substrate. Residues H245 and H271 each contribute to the Ni(2+) site. The active-site Proton donor is H319. A Ni(2+)-binding site is contributed by D359.

The protein belongs to the metallo-dependent hydrolases superfamily. Urease alpha subunit family. Heterotrimer of UreA (gamma), UreB (beta) and UreC (alpha) subunits. Three heterotrimers associate to form the active enzyme. Ni cation is required as a cofactor. Carboxylation allows a single lysine to coordinate two nickel ions.

The protein resides in the cytoplasm. The enzyme catalyses urea + 2 H2O + H(+) = hydrogencarbonate + 2 NH4(+). It participates in nitrogen metabolism; urea degradation; CO(2) and NH(3) from urea (urease route): step 1/1. The polypeptide is Urease subunit alpha 1 (Psychrobacter cryohalolentis (strain ATCC BAA-1226 / DSM 17306 / VKM B-2378 / K5)).